The chain runs to 396 residues: Alpha-1-antitrypsin (396 aa).

The signal sequence occupies residues 1–2 (HV). The interval 1 to 24 (HVEDPQGDAAQKTDTSHHDQEHST) is disordered. The segment covering 14 to 24 (DTSHHDQEHST) has biased composition (basic and acidic residues). A Phosphoserine modification is found at Ser16. 4 N-linked (GlcNAc...) asparagine glycosylation sites follow: Asn48, Asn85, Asn123, and Asn249. An RCL region spans residues 351–370 (GAMFLEAIPMSIPPEVKFNK). Ser361 carries the phosphoserine modification.

Belongs to the serpin family. As to quaternary structure, interacts with CELA2A. Interacts with ERGIC3 and LMAN1/ERGIC53. Interacts with PRSS1/Trypsin. Plasma.

It localises to the secreted. In terms of biological role, inhibitor of serine proteases. Its primary target is elastase, but it also has a moderate affinity for plasmin and thrombin. Inhibits trypsin, chymotrypsin and plasminogen activator. In Chlorocebus aethiops (Green monkey), this protein is Alpha-1-antitrypsin (SERPINA1).